Here is a 123-residue protein sequence, read N- to C-terminus: Large ribosomal subunit protein uL18 (123 aa).

Belongs to the universal ribosomal protein uL18 family. As to quaternary structure, part of the 50S ribosomal subunit; part of the 5S rRNA/L5/L18/L25 subcomplex. Contacts the 5S and 23S rRNAs.

Its function is as follows. This is one of the proteins that bind and probably mediate the attachment of the 5S RNA into the large ribosomal subunit, where it forms part of the central protuberance. This is Large ribosomal subunit protein uL18 from Wolbachia sp. subsp. Brugia malayi (strain TRS).